We begin with the raw amino-acid sequence, 1371 residues long: Major capsid protein (1371 aa).

It belongs to the herpesviridae major capsid protein family. Homomultimer. Makes the hexons and eleven out of twelve pentons. Interacts with triplex proteins 1/TRX1 and 2/TRX2; adjacent capsomers are linked together in groups of three by triplexes, heterotrimeric complexes composed of one molecule of TRX1 and two molecules of TRX2. Interacts with scaffold protein; this interaction allows efficient MCP transport to the host nucleus. Interacts with capsid vertex component 2/CVC2. Interacts with the small capsomere-interacting protein/SCP.

The protein resides in the virion. Its subcellular location is the host nucleus. Its function is as follows. Self-assembles to form an icosahedral capsid with a T=16 symmetry, about 200 nm in diameter, and consisting of 150 hexons and 12 pentons (total of 162 capsomers). Hexons form the edges and faces of the capsid and are each composed of six MCP molecules. In contrast, one penton is found at each of the 12 vertices. Eleven of the pentons are MCP pentamers, while the last vertex is occupied by the portal complex. The capsid is surrounded by a layer of proteinaceous material designated the tegument which, in turn, is enclosed in an envelope of host cell-derived lipids containing virus-encoded glycoproteins. The sequence is that of Major capsid protein from Saimiriine herpesvirus 2 (strain 11) (SaHV-2).